Consider the following 372-residue polypeptide: Cytochrome b (372 aa).

4 helical membrane-spanning segments follow: residues 25 to 45 (FGSM…FLAL), 69 to 90 (WIMQ…YIHI), 105 to 125 (WLSG…GYVL), and 170 to 190 (FFAL…IHII). Heme b is bound by residues His-75 and His-89. 2 residues coordinate heme b: His-174 and His-188. His-193 contributes to the a ubiquinone binding site. 4 consecutive transmembrane segments (helical) span residues 218–238 (YKDM…LSFA), 280–300 (LGGT…PFTH), 312–332 (LSQI…WTAS), and 339–358 (FITI…ITTP).

This sequence belongs to the cytochrome b family. As to quaternary structure, the cytochrome bc1 complex contains 3 respiratory subunits (MT-CYB, CYC1 and UQCRFS1), 2 core proteins (UQCRC1 and UQCRC2) and probably 6 low-molecular weight proteins. Heme b serves as cofactor.

It localises to the mitochondrion inner membrane. Its function is as follows. Component of the ubiquinol-cytochrome c reductase complex (complex III or cytochrome b-c1 complex) that is part of the mitochondrial respiratory chain. The b-c1 complex mediates electron transfer from ubiquinol to cytochrome c. Contributes to the generation of a proton gradient across the mitochondrial membrane that is then used for ATP synthesis. This chain is Cytochrome b (MT-CYB), found in Naja nivea (Cape cobra).